Consider the following 829-residue polypeptide: Leucine--tRNA ligase (829 aa).

Residues Pro-40–His-50 carry the 'HIGH' region motif. Residues Lys-594–Ser-598 carry the 'KMSKS' region motif. Residue Lys-597 participates in ATP binding.

The protein belongs to the class-I aminoacyl-tRNA synthetase family.

The protein resides in the cytoplasm. The enzyme catalyses tRNA(Leu) + L-leucine + ATP = L-leucyl-tRNA(Leu) + AMP + diphosphate. This chain is Leucine--tRNA ligase, found in Anaplasma marginale (strain St. Maries).